The sequence spans 242 residues: Small ribosomal subunit protein uS2 (242 aa).

It belongs to the universal ribosomal protein uS2 family.

The chain is Small ribosomal subunit protein uS2 from Idiomarina loihiensis (strain ATCC BAA-735 / DSM 15497 / L2-TR).